A 301-amino-acid polypeptide reads, in one-letter code: MERLTLPPGGAEAVDEYLEYRRIVGEDDGGKLFTPEEYEEYKKKVLPMRLQNRLFVSWRSPTGMDCKLVGPETLCFCTHRYKQHKTDFETIPQQRPIALPCRVSGCRCKAYHYVPLNGTQPIRCRCKHFADQHSAALGFTCNACSKCSGFHSCYTCACGQPAYAHDTVVETRQERLAQGKPVGRDVPYAAMGGLTGFSSLAEGYMRLDDSGIGAPSVEVLDSAVSAMDHPFLRAMHAPSTSSPQPLAGGNEVGPSTQLSSLRKPEEDDMAYFERQYQERIKLEKAAKQKGKVPPLPSTKPS.

Positions 235–271 (MHAPSTSSPQPLAGGNEVGPSTQLSSLRKPEEDDMAY) are disordered.

Belongs to the FAM221 family.

The polypeptide is Protein FAM221A (Fam221a) (Mus musculus (Mouse)).